The primary structure comprises 255 residues: MFLSSRTIFVGLCFLFVLAPCFTRATTNEVQVSCDSHNFNNGKHFRSCVDLPVLDSFLHYSYVRETGVLEVAYRHTNIESSSWIAWGINPTSKGMIGAQTLLAYRNSTSGFMRAYTSSINGYTPMLQEGPLSFRVTQLSAEYLNREMTIFATMVWPSNTTVVNHLWQDGPLKEGDRLGMHAMSGNHLKSMANLDLLSGQVMTTKAANDNMLLVKSIHGLVNAVCWGIFIPIGVMAARYMRTYKGLDPTWFYILIL.

The first 27 residues, 1 to 27 (MFLSSRTIFVGLCFLFVLAPCFTRATT), serve as a signal peptide directing secretion. Positions 54–169 (LDSFLHYSYV…TVVNHLWQDG (116 aa)) constitute a DOMON domain. The Cytochrome b561 domain occupies 176-255 (RLGMHAMSGN…DPTWFYILIL (80 aa)). The chain crosses the membrane as a helical span at residues 216-236 (IHGLVNAVCWGIFIPIGVMAA).

It is found in the membrane. This is Cytochrome b561 and DOMON domain-containing protein At5g48750 from Arabidopsis thaliana (Mouse-ear cress).